The chain runs to 322 residues: Sideroflexin-1 (322 aa).

Serine 2 bears the N-acetylserine mark. At 2-102 the chain is on the mitochondrial matrix side; the sequence is SGELPPNINI…MSAQVPMNMT (101 aa). A helical membrane pass occupies residues 103–120; the sequence is ITGCMMTFYRTTPAVLFW. Over 121–146 the chain is Mitochondrial intermembrane; sequence QWINQSFNAVVNYTNRSGDAPLTVNE. The helical transmembrane segment at 147–167 threads the bilayer; sequence LGTAYVSATTGAVATALGLNA. At 168–174 the chain is on the mitochondrial matrix side; it reads LTKHVSP. A helical transmembrane segment spans residues 175–195; that stretch reads LIGRFVPFAAVAAANCINIPL. Topologically, residues 196–228 are mitochondrial intermembrane; that stretch reads MRQRELKVGIPVTDENGNRLGESANAAKQAITQ. The chain crosses the membrane as a helical span at residues 229–249; the sequence is VVVSRILMAAPGMAIPPFIMN. Over 250-266 the chain is Mitochondrial matrix; it reads TLEKKAFLKRFPWMSAP. A helical membrane pass occupies residues 267–287; the sequence is VQVGIVGFCLVFATPLCCALF. Over 288–322 the chain is Mitochondrial intermembrane; it reads PQKSSMSVTSLEAELQARIRETYPELRRVYFNKGL.

Belongs to the sideroflexin family.

It is found in the mitochondrion inner membrane. It catalyses the reaction L-serine(in) = L-serine(out). The catalysed reaction is L-alanine(in) = L-alanine(out). The enzyme catalyses L-cysteine(in) = L-cysteine(out). Its function is as follows. Amino acid transporter importing serine, an essential substrate of the mitochondrial branch of the one-carbon pathway, into mitochondria. Mitochondrial serine is then converted to glycine and formate, which exits to the cytosol where it is used to generate the charged folates that serve as one-carbon donors. May also transport other amino acids including alanine and cysteine. In Bos taurus (Bovine), this protein is Sideroflexin-1 (SFXN1).